An 812-amino-acid chain; its full sequence is ATP-dependent DNA helicase PIF3 (812 aa).

Residue 247–254 participates in ATP binding; that stretch reads GSAGTGKT. Residues 741 to 761 mediate DNA binding; the sequence is HLVYVACSRVRSMDQLIVRNV.

It belongs to the helicase family. PIF1 subfamily. As to quaternary structure, monomer. Mg(2+) is required as a cofactor.

Its subcellular location is the cytoplasm. It catalyses the reaction Couples ATP hydrolysis with the unwinding of duplex DNA at the replication fork by translocating in the 5'-3' direction. This creates two antiparallel DNA single strands (ssDNA). The leading ssDNA polymer is the template for DNA polymerase III holoenzyme which synthesizes a continuous strand.. The enzyme catalyses ATP + H2O = ADP + phosphate + H(+). DNA-dependent ATPase and 5'-3' DNA helicase required for the maintenance of genome stability. This chain is ATP-dependent DNA helicase PIF3, found in Trypanosoma brucei brucei (strain 927/4 GUTat10.1).